Consider the following 381-residue polypeptide: Protein-glutamate methylesterase/protein-glutamine glutaminase 1 (381 aa).

Residues arginine 14–serine 132 enclose the Response regulatory domain. Aspartate 65 carries the post-translational modification 4-aspartylphosphate. The disordered stretch occupies residues glutamine 143 to valine 173. Low complexity predominate over residues alanine 144–arginine 153. Residues proline 188–arginine 381 form the CheB-type methylesterase domain. Catalysis depends on residues serine 199, histidine 227, and aspartate 323.

This sequence belongs to the CheB family. In terms of processing, phosphorylated by CheA. Phosphorylation of the N-terminal regulatory domain activates the methylesterase activity.

The protein resides in the cytoplasm. The enzyme catalyses [protein]-L-glutamate 5-O-methyl ester + H2O = L-glutamyl-[protein] + methanol + H(+). It catalyses the reaction L-glutaminyl-[protein] + H2O = L-glutamyl-[protein] + NH4(+). Its function is as follows. Involved in chemotaxis. Part of a chemotaxis signal transduction system that modulates chemotaxis in response to various stimuli. Catalyzes the demethylation of specific methylglutamate residues introduced into the chemoreceptors (methyl-accepting chemotaxis proteins or MCP) by CheR. Also mediates the irreversible deamidation of specific glutamine residues to glutamic acid. The sequence is that of Protein-glutamate methylesterase/protein-glutamine glutaminase 1 from Paramagnetospirillum magneticum (strain ATCC 700264 / AMB-1) (Magnetospirillum magneticum).